Consider the following 87-residue polypeptide: Protein Isd11 (87 aa).

This sequence belongs to the complex I LYR family. In terms of assembly, interacts with IscS; the interaction enhances cysteine desulfurase activity of IscS. Component of a complex, at least composed of IscS, Isd11 and IscU.

The protein resides in the mitochondrion. Its pathway is cofactor biosynthesis; iron-sulfur cluster biosynthesis. Its function is as follows. Participates in iron-sulfur cluster formation (ISC) pathway for iron-sulfur (Fe-S) cluster biogenesis. Enhances cysteine desulfurase activity of IscS. This chain is Protein Isd11, found in Plasmodium falciparum (isolate 3D7).